A 527-amino-acid chain; its full sequence is Putative BTB/POZ domain-containing protein R225 (527 aa).

The 74-residue stretch at 16-89 folds into the BTB domain; that stretch reads TDLELVLTDP…YGQTNRSTDY (74 aa).

This sequence belongs to the mimivirus BTB/WD family.

The sequence is that of Putative BTB/POZ domain-containing protein R225 from Acanthamoeba polyphaga (Amoeba).